Reading from the N-terminus, the 195-residue chain is dTTP/UTP pyrophosphatase (195 aa).

Asp73 functions as the Proton acceptor in the catalytic mechanism.

This sequence belongs to the Maf family. YhdE subfamily. The cofactor is a divalent metal cation.

The protein resides in the cytoplasm. The catalysed reaction is dTTP + H2O = dTMP + diphosphate + H(+). It carries out the reaction UTP + H2O = UMP + diphosphate + H(+). Its function is as follows. Nucleoside triphosphate pyrophosphatase that hydrolyzes dTTP and UTP. May have a dual role in cell division arrest and in preventing the incorporation of modified nucleotides into cellular nucleic acids. The chain is dTTP/UTP pyrophosphatase from Exiguobacterium sibiricum (strain DSM 17290 / CCUG 55495 / CIP 109462 / JCM 13490 / 255-15).